We begin with the raw amino-acid sequence, 180 residues long: Adenine phosphoribosyltransferase (180 aa).

Ala2 is subject to N-acetylalanine. A phosphoserine mark is found at Ser15 and Ser30. A Phosphotyrosine modification is found at Tyr60. Residue Ser66 is modified to Phosphoserine. Thr135 bears the Phosphothreonine mark.

It belongs to the purine/pyrimidine phosphoribosyltransferase family. As to quaternary structure, homodimer.

The protein localises to the cytoplasm. It catalyses the reaction AMP + diphosphate = 5-phospho-alpha-D-ribose 1-diphosphate + adenine. It functions in the pathway purine metabolism; AMP biosynthesis via salvage pathway; AMP from adenine: step 1/1. Its function is as follows. Catalyzes a salvage reaction resulting in the formation of AMP, that is energically less costly than de novo synthesis. The chain is Adenine phosphoribosyltransferase from Bos taurus (Bovine).